The sequence spans 305 residues: tRNA uridine(34) hydroxylase (305 aa).

A Rhodanese domain is found at 125-219 (ADENTVVVDK…YLEEVPREQS (95 aa)). Cys179 (cysteine persulfide intermediate) is an active-site residue.

Belongs to the TrhO family.

It carries out the reaction uridine(34) in tRNA + AH2 + O2 = 5-hydroxyuridine(34) in tRNA + A + H2O. Its function is as follows. Catalyzes oxygen-dependent 5-hydroxyuridine (ho5U) modification at position 34 in tRNAs. The protein is tRNA uridine(34) hydroxylase of Brucella abortus (strain S19).